The sequence spans 747 residues: Kinesin-like protein KIF3B (747 aa).

Met1 is modified (N-acetylmethionine). Ser2 carries the N-acetylserine; in Kinesin-like protein KIF3B, N-terminally processed modification. One can recognise a Kinesin motor domain in the interval 9 to 340 (SVRVVVRCRP…LRYANRAKNI (332 aa)). An ATP-binding site is contributed by 96–103 (GQTGTGKT). Residues 346 to 579 (VNEDPKDALL…EQTQNELTRE (234 aa)) adopt a coiled-coil conformation. Disordered stretches follow at residues 374–412 (IGRR…DKDD) and 698–747 (IQVD…LVPK). Over residues 393–411 (GEEEEEEGEEGEEDGDDKD) the composition is skewed to acidic residues. Positions 580-747 (LKLKHLIIEN…YPQSRGLVPK (168 aa)) are globular. Residues 701 to 710 (DASSFESTAS) are compositionally biased toward polar residues. Basic residues predominate over residues 711-721 (RKPKARPKSGR). Low complexity predominate over residues 722–735 (KSGSSSSSSGNPAS).

It belongs to the TRAFAC class myosin-kinesin ATPase superfamily. Kinesin family. Kinesin II subfamily. In terms of assembly, heterodimer of KIF3A and KIF3B. KIF3A/KIF3B heterodimer interacts with KIFAP3 forming a heterotrimeric (KIF3A/KIF3B/KIFAP3) complex. Interacts with the SMC3 subunit of the cohesin complex. Interacts directly with IFT20. Interacts with FLCN.

It is found in the cytoplasm. The protein localises to the cytoskeleton. It localises to the cell projection. Its subcellular location is the cilium. The protein resides in the dendritic spine. Functionally, microtubule-based molecular motor that transport intracellular cargos, such as vesicles, organelles and protein complexes. Uses ATP hydrolysis to generate force to bind and move along the microtubule. Plays a role in cilia formation. Involved in photoreceptor integrity and opsin trafficking in rod photoreceptors. Transports vesicles containing N-methyl-D-aspartate (NMDA) receptor subunit GRIN2A into neuronal dendrites. The polypeptide is Kinesin-like protein KIF3B (Mus musculus (Mouse)).